The sequence spans 416 residues: Vacuole membrane protein KMS1 (416 aa).

The residue at position 2 (G2) is an N-acetylglycine. The Cytoplasmic segment spans residues 2-60; sequence GSAGVASSSSDVAISALREKHEKEVENLTLTTQPLNTLKLFVEATIQYIKRSISYLLAH. A helical membrane pass occupies residues 61–81; sequence GGWFILITTLLVVSGGLLVTV. The Lumenal portion of the chain corresponds to 82–101; it reads DGPHGKHVEEVLEYVRYGLW. The chain crosses the membrane as a helical span at residues 102 to 124; sequence WIALGVASSIGLGSGLHTFVLYL. Over 125–257 the chain is Cytoplasmic; it reads GPHIALFTLK…WLLTHSQHLN (133 aa). Residues 258 to 278 form a helical membrane-spanning segment; that stretch reads FFTVLVLASVPNPLFDLAGIM. Over 279–289 the chain is Lumenal; the sequence is CGQFGIPFWEF. A helical membrane pass occupies residues 290–312; the sequence is FLATLIGKAIIKTHIQTIFIICV. Topologically, residues 313-323 are cytoplasmic; that stretch reads CNNQLLDWMEN. A helical transmembrane segment spans residues 324–344; that stretch reads ELIWILSHVPGLASMLPGLTA. Residues 345–372 lie on the Lumenal side of the membrane; sequence KLHAMKEKYIDAPSPVPSHIKVKKWDFS. The chain crosses the membrane as a helical span at residues 373 to 393; the sequence is FASIWNGIVWLMLLNFFVKIV. The Cytoplasmic segment spans residues 394–416; it reads TATAQRHLKKKQEKEMATLTHSD.

This sequence belongs to the VMP1 family.

It is found in the endoplasmic reticulum membrane. Its function is as follows. Involved in the early secretory pathway. Required for the correct export of secretory products from the endoplasmic reticulum (ER) and involved in the maintenance of ER integrity. In Arabidopsis thaliana (Mouse-ear cress), this protein is Vacuole membrane protein KMS1.